The primary structure comprises 85 residues: Homeobox protein knotted-1-like 4 (85 aa).

The ELK domain maps to 1 to 21; the sequence is ELKYQLLKKYSGYLSSLRQEF. The homeobox; TALE-type DNA-binding region spans 22 to 85; the sequence is SKKKKKGKLP…NQRKRHWKPS (64 aa).

This sequence belongs to the TALE/KNOX homeobox family. In terms of tissue distribution, strongly expressed in ear inflorescence primordia and shoot meristem. Weakly expressed in embryos. Absent from leaves.

The protein localises to the nucleus. Its function is as follows. Probably binds to the DNA sequence 5'-TGAC-3'. In Zea mays (Maize), this protein is Homeobox protein knotted-1-like 4 (KNOX4).